Reading from the N-terminus, the 159-residue chain is MADFSHLDEKGRVQMVDVSDKKTTDRLAIAVGKLSMKPDTLASILDQAMPKGNVLETARIAGIMAAKKTWELIPMCHPLELTHVQVDFFPETETSSIRIEGQARVAGRTGVEMEALTAVSVAALTIYDMCKSADKAMAIEKIHLVRKYGGKSGEFVNEG.

Substrate-binding positions include 75–77 and 113–114; these read MCH and ME. Residue Asp128 is part of the active site.

This sequence belongs to the MoaC family. Homohexamer; trimer of dimers.

It catalyses the reaction (8S)-3',8-cyclo-7,8-dihydroguanosine 5'-triphosphate = cyclic pyranopterin phosphate + diphosphate. It participates in cofactor biosynthesis; molybdopterin biosynthesis. In terms of biological role, catalyzes the conversion of (8S)-3',8-cyclo-7,8-dihydroguanosine 5'-triphosphate to cyclic pyranopterin monophosphate (cPMP). This chain is Cyclic pyranopterin monophosphate synthase, found in Desulfatibacillum aliphaticivorans.